A 942-amino-acid chain; its full sequence is Serine/threonine-protein kinase ATG1 (942 aa).

Positions 11-312 (YVVEKEIGKG…FEEFFNNKIV (302 aa)) constitute a Protein kinase domain. Residues 17 to 25 (IGKGSFATV) and lysine 41 contribute to the ATP site. Residue aspartate 159 is the Proton acceptor of the active site. The span at 435-452 (NSSRVNKLDKSNLSGKSD) shows a compositional bias: polar residues. Disordered stretches follow at residues 435-454 (NSSR…SDSS), 505-529 (QPHN…SRRA), and 817-836 (NSKP…NDSN). The span at 515-529 (RAPSTTSGGTSSRRA) shows a compositional bias: low complexity. The span at 819 to 834 (KPGTHNQSPKSKISND) shows a compositional bias: polar residues.

This sequence belongs to the protein kinase superfamily. Ser/Thr protein kinase family. APG1/unc-51/ULK1 subfamily. As to quaternary structure, homodimer. Forms a ternary complex with ATG13 and ATG17.

The protein resides in the cytoplasm. Its subcellular location is the preautophagosomal structure membrane. It catalyses the reaction L-seryl-[protein] + ATP = O-phospho-L-seryl-[protein] + ADP + H(+). The catalysed reaction is L-threonyl-[protein] + ATP = O-phospho-L-threonyl-[protein] + ADP + H(+). Serine/threonine protein kinase involved in the cytoplasm to vacuole transport (Cvt) and found to be essential in autophagy, where it is required for the formation of autophagosomes. Involved in the clearance of protein aggregates which cannot be efficiently cleared by the proteasome. Required for selective autophagic degradation of the nucleus (nucleophagy) as well as for mitophagy which contributes to regulate mitochondrial quantity and quality by eliminating the mitochondria to a basal level to fulfill cellular energy requirements and preventing excess ROS production. Also involved in endoplasmic reticulum-specific autophagic process, in selective removal of ER-associated degradation (ERAD) substrates. Plays a key role in ATG9 and ATG23 cycling through the pre-autophagosomal structure and is necessary to promote ATG18 binding to ATG9 through phosphorylation of ATG9. Catalyzes phosphorylation of ATG4, decreasing the interaction between ATG4 and ATG8 and impairing deconjugation of PE-conjugated forms of ATG8. Contributes to virulence by conferring resistance to unstable nutrient environments and immune defense of hosts. This Candida glabrata (strain ATCC 2001 / BCRC 20586 / JCM 3761 / NBRC 0622 / NRRL Y-65 / CBS 138) (Yeast) protein is Serine/threonine-protein kinase ATG1.